The chain runs to 393 residues: S-adenosylmethionine synthase (393 aa).

Position 17 (H17) interacts with ATP. Position 19 (D19) interacts with Mg(2+). A K(+)-binding site is contributed by E45. 2 residues coordinate L-methionine: E58 and Q106. A flexible loop region spans residues 106–116 (QSAHIAQGVDA). Residues 171–173 (DAK), 237–238 (KF), D246, 252–253 (RK), A269, and K273 contribute to the ATP site. D246 is an L-methionine binding site. K277 lines the L-methionine pocket.

This sequence belongs to the AdoMet synthase family. As to quaternary structure, homotetramer; dimer of dimers. Mg(2+) is required as a cofactor. Requires K(+) as cofactor.

It is found in the cytoplasm. The enzyme catalyses L-methionine + ATP + H2O = S-adenosyl-L-methionine + phosphate + diphosphate. It functions in the pathway amino-acid biosynthesis; S-adenosyl-L-methionine biosynthesis; S-adenosyl-L-methionine from L-methionine: step 1/1. In terms of biological role, catalyzes the formation of S-adenosylmethionine (AdoMet) from methionine and ATP. The overall synthetic reaction is composed of two sequential steps, AdoMet formation and the subsequent tripolyphosphate hydrolysis which occurs prior to release of AdoMet from the enzyme. This chain is S-adenosylmethionine synthase, found in Jannaschia sp. (strain CCS1).